A 1153-amino-acid chain; its full sequence is AP-3 complex subunit delta-1 (1153 aa).

Position 2 is an N-acetylalanine (Ala2). 11 HEAT repeats span residues 34-71 (KYISQCIDEIKQELKQDNIAVKANAVCKLTYLQMLGYD), 77-114 (FNIIEVMSASKFTFKRIGYLAASQSFHEGTDVIMLTTN), 142-179 (DLARDLANDIMTLMSHTKPYIRKKAVLIMYKVFLKYPE), 180-216 (SLRPAFPRLKEKLEDPDPGVQSAAVNVICELARRNPK), 254-292 (RLGKKLIEPLTNLIHSTSAMSLLYECVNTVIAVLISLSS), 299-336 (ASIQLCVQKLRILIEDSDQNLKYLGLLAMSKILKTHPK), 338-373 (VQSHKDLILQCLDDKDESIRLRALDLLYGMVSKKNL), 375-409 (EIVKKLMTHVDKAEGTTYRDELLTKIIDICSQSNY), 431-468 (TRHGHLIAAQMLDVAIRVKAIRKFAVSQMSALLDSAHL), 497-535 (QEPHHTLEAMLRPRVTTLPGHIQAVYVQNVVKLYASILQ), and 548-585 (AVTQLMVDRLPQFVQSADLEVQERASCILQLVKHIQKL). Disordered regions lie at residues 629–696 (EPLS…YQDT) and 726–920 (KLEE…PPES). Phosphoserine is present on residues Ser632, Ser634, Ser636, and Ser658. The span at 639–675 (ERPRAVFHEEEQRRPKHRPSEADEEELARRREARKQE) shows a compositional bias: basic and acidic residues. The stretch at 659–679 (EADEEELARRREARKQEQANN) forms a coiled coil. A Phosphoserine modification is found at Ser688. The stretch at 725–756 (VKLEEERRHRQKLEKDKRRKKRKEKEKKGKRR) forms a coiled coil. The span at 726–740 (KLEEERRHRQKLEKD) shows a compositional bias: basic and acidic residues. The span at 741 to 758 (KRRKKRKEKEKKGKRRHS) shows a compositional bias: basic residues. A phosphoserine mark is found at Ser758 and Ser759. Residue Thr762 is modified to Phosphothreonine. Phosphoserine is present on residues Ser764, Ala785, Ser788, Lys828, and Ser829. Over residues 777–794 (VTEEMPENALPSDEDDKD) the composition is skewed to acidic residues. Basic and acidic residues predominate over residues 795–839 (PNDPYRALDIDLDKPLADSEKLPIQKHRNTETSKSPEKDVPMVEK). Basic residues-rich tracts occupy residues 840–853 (KSKKPKKKEKKHKE) and 863–879 (EKEKKKSPKPKKKKHRK). The stretch at 845 to 869 (KKKEKKHKEKERDKEKKKEKEKKKS) forms a coiled coil. Val931 is modified (phosphoserine).

It belongs to the adaptor complexes large subunit family. As to quaternary structure, AP-3 associates with the BLOC-1 complex. Adaptor protein complex 3 (AP-3) is a heterotetramer composed of two large adaptins (delta-type subunit AP3D1 and beta-type subunit AP3B1 or AP3B2), a medium adaptin (mu-type subunit AP3M1 or AP3M2) and a small adaptin (sigma-type subunit APS1 or AP3S2). Interacts with SLC30A2. Interacts with CLN3 (via dileucine motif); this interaction facilitates lysosomal targeting. As to expression, present in all adult tissues examined with the highest levels in skeletal muscle, heart, pancreas and testis.

The protein resides in the cytoplasm. It localises to the golgi apparatus membrane. In terms of biological role, part of the AP-3 complex, an adaptor-related complex which is not clathrin-associated. The complex is associated with the Golgi region as well as more peripheral structures. It facilitates the budding of vesicles from the Golgi membrane and may be directly involved in trafficking to lysosomes. Involved in process of CD8+ T-cell and NK cell degranulation. In concert with the BLOC-1 complex, AP-3 is required to target cargos into vesicles assembled at cell bodies for delivery into neurites and nerve terminals. The sequence is that of AP-3 complex subunit delta-1 (AP3D1) from Homo sapiens (Human).